The primary structure comprises 158 residues: S-ribosylhomocysteine lyase (158 aa).

Residues H54, H58, and C124 each contribute to the Fe cation site.

It belongs to the LuxS family. As to quaternary structure, homodimer. Fe cation is required as a cofactor.

It carries out the reaction S-(5-deoxy-D-ribos-5-yl)-L-homocysteine = (S)-4,5-dihydroxypentane-2,3-dione + L-homocysteine. Involved in the synthesis of autoinducer 2 (AI-2) which is secreted by bacteria and is used to communicate both the cell density and the metabolic potential of the environment. The regulation of gene expression in response to changes in cell density is called quorum sensing. Catalyzes the transformation of S-ribosylhomocysteine (RHC) to homocysteine (HC) and 4,5-dihydroxy-2,3-pentadione (DPD). This is S-ribosylhomocysteine lyase from Lactobacillus johnsonii (strain CNCM I-12250 / La1 / NCC 533).